A 65-amino-acid chain; its full sequence is DNA-directed RNA polymerase subunit Rpo10 (65 aa).

Residues Cys7, Cys10, Cys44, and Cys45 each contribute to the Zn(2+) site.

The protein belongs to the archaeal Rpo10/eukaryotic RPB10 RNA polymerase subunit family. Part of the RNA polymerase complex. Requires Zn(2+) as cofactor.

It localises to the cytoplasm. Its subcellular location is the chromosome. The enzyme catalyses RNA(n) + a ribonucleoside 5'-triphosphate = RNA(n+1) + diphosphate. Functionally, DNA-dependent RNA polymerase (RNAP) catalyzes the transcription of DNA into RNA using the four ribonucleoside triphosphates as substrates. In Thermococcus kodakarensis (strain ATCC BAA-918 / JCM 12380 / KOD1) (Pyrococcus kodakaraensis (strain KOD1)), this protein is DNA-directed RNA polymerase subunit Rpo10.